The chain runs to 34 residues: Cytochrome b6-f complex subunit 8 (34 aa).

A helical membrane pass occupies residues 3–23 (IFQIGWAALAAIFTFSIAMVV).

The protein belongs to the PetN family. In terms of assembly, the 4 large subunits of the cytochrome b6-f complex are cytochrome b6, subunit IV (17 kDa polypeptide, PetD), cytochrome f and the Rieske protein, while the 4 small subunits are PetG, PetL, PetM and PetN. The complex functions as a dimer.

It localises to the cellular thylakoid membrane. In terms of biological role, component of the cytochrome b6-f complex, which mediates electron transfer between photosystem II (PSII) and photosystem I (PSI), cyclic electron flow around PSI, and state transitions. The protein is Cytochrome b6-f complex subunit 8 of Prochlorococcus marinus subsp. pastoris (strain CCMP1986 / NIES-2087 / MED4).